A 207-amino-acid chain; its full sequence is U1 small nuclear ribonucleoprotein C (207 aa).

The Matrin-type zinc finger occupies 4–36 (YYCDYCDTYLTHDSPSVRKQHNAGYKHKANVRI). Composition is skewed to pro residues over residues 105–115 (PPQGYMPPPGV) and 122–131 (PGAPLPPPPQ). Residues 105–207 (PPQGYMPPPG…PSAESPESNE (103 aa)) are disordered. The span at 132-144 (NGILRPPGMAPIP) shows a compositional bias: low complexity. Over residues 162–183 (GPPPNYNGLPPPPPYHTNPAAP) the composition is skewed to pro residues. The span at 184-207 (PSGNFNNPNLNNPNPSAESPESNE) shows a compositional bias: low complexity.

It belongs to the U1 small nuclear ribonucleoprotein C family. In terms of assembly, U1 snRNP is composed of the 7 core Sm proteins B/B', D1, D2, D3, E, F and G that assemble in a heptameric protein ring on the Sm site of the small nuclear RNA to form the core snRNP, and at least 3 U1 snRNP-specific proteins U1-70K, U1-A and U1-C. U1-C interacts with U1 snRNA and the 5' splice-site region of the pre-mRNA.

It is found in the nucleus. Component of the spliceosomal U1 snRNP, which is essential for recognition of the pre-mRNA 5' splice-site and the subsequent assembly of the spliceosome. U1-C is directly involved in initial 5' splice-site recognition for both constitutive and regulated alternative splicing. The interaction with the 5' splice-site seems to precede base-pairing between the pre-mRNA and the U1 snRNA. Stimulates commitment or early (E) complex formation by stabilizing the base pairing of the 5' end of the U1 snRNA and the 5' splice-site region. This chain is U1 small nuclear ribonucleoprotein C, found in Arabidopsis thaliana (Mouse-ear cress).